Reading from the N-terminus, the 646-residue chain is MSSPSMFDRISSPRQRLSNPLRSPPIREVSEYDLDELEPRSDDVLFDQEPPLPRLKKNMQHVSATSTRRSSSPASWDSKHRYSNSPPHTRSKPIFAGPPPPIASSMMMNQHPSRQSTVSSHGDNGRGYGLISASRFGSNSPSQKHVDNRPRLDSIWRSLQRREKALERDIQQLLDLQASGLIAGSGEGSESNFGSDTTTGESTFYSTATSKSRMMNSLHMPTRSTPDGNVIPVRQPVSNKPRGLKSTRVGLQRSMAALSDLKAEEDLHLSTALEQRKDALAYLDKMSKRRDDIYSELHALEDDEEEPLGQELRSLEAERQELDHDIQRLEEKLAGAKKRRRWVREKMEDVKGRREAGLSGYRAAGRDVDIEVRTLMQTPPIAPLDIDALGYGENTRPKENMDILRGTEFLQLRPERRTVEMARTWWQGEIAALERRKAQISQDRQALIEGSEVWSDVTGLVAQFEAKLRELVKSSQAGDADEEPQQAAMQSQLSEMDDVVQELQKRLQLAESKHWNLLICAIGAELEAFVEAKALLSDTLGLPEPAAAVDSPELSDSTDKAEGTSQEERADSHDESDNEVPADLLVSRMEDHDHDPPDSPQQQSVVLRRGSAGNNEVPVEFLADLHGPNKIEQDTEIAAVTRLMSK.

2 disordered regions span residues 1 to 148 and 221 to 245; these read MSSP…HVDN and PTRS…RGLK. The segment covering 12-21 has biased composition (polar residues); the sequence is SPRQRLSNPL. The span at 63-75 shows a compositional bias: low complexity; sequence SATSTRRSSSPAS. The segment covering 106 to 122 has biased composition (polar residues); sequence MMMNQHPSRQSTVSSHG. 2 coiled-coil regions span residues 283–350 and 485–514; these read LDKM…MEDV and QQAA…ESKH. Disordered regions lie at residues 475–494 and 546–612; these read SQAG…SQLS and AAAV…RGSA. Basic and acidic residues-rich tracts occupy residues 557-575 and 588-597; these read STDK…SHDE and RMEDHDHDPP.

It belongs to the ATG28 family.

It localises to the cytoplasm. The protein localises to the vacuole membrane. It is found in the cytoplasmic vesicle membrane. In terms of biological role, required for the autophagic degradation of peroxisomes called pexophagy, but not essential for general autophagy. Involved in resistance to elevated pH. This chain is Autophagy-related protein 28, found in Gibberella zeae (strain ATCC MYA-4620 / CBS 123657 / FGSC 9075 / NRRL 31084 / PH-1) (Wheat head blight fungus).